A 548-amino-acid polypeptide reads, in one-letter code: Hydroxylamine reductase (548 aa).

[4Fe-4S] cluster-binding residues include Cys-3, Cys-6, Cys-15, and Cys-21. Residues His-240, Glu-264, Cys-308, Cys-402, Cys-430, Cys-455, Glu-490, and Lys-492 each contribute to the hybrid [4Fe-2O-2S] cluster site. At Cys-402 the chain carries Cysteine persulfide.

It belongs to the HCP family. Requires [4Fe-4S] cluster as cofactor. It depends on hybrid [4Fe-2O-2S] cluster as a cofactor.

Its subcellular location is the cytoplasm. The enzyme catalyses A + NH4(+) + H2O = hydroxylamine + AH2 + H(+). Its function is as follows. Catalyzes the reduction of hydroxylamine to form NH(3) and H(2)O. This Parabacteroides distasonis (strain ATCC 8503 / DSM 20701 / CIP 104284 / JCM 5825 / NCTC 11152) protein is Hydroxylamine reductase.